Consider the following 155-residue polypeptide: Protein-export protein SecB (155 aa).

Belongs to the SecB family. Homotetramer, a dimer of dimers. One homotetramer interacts with 1 SecA dimer.

It is found in the cytoplasm. Its function is as follows. One of the proteins required for the normal export of preproteins out of the cell cytoplasm. It is a molecular chaperone that binds to a subset of precursor proteins, maintaining them in a translocation-competent state. It also specifically binds to its receptor SecA. The chain is Protein-export protein SecB from Paramagnetospirillum magneticum (strain ATCC 700264 / AMB-1) (Magnetospirillum magneticum).